Consider the following 116-residue polypeptide: Large ribosomal subunit protein bL20c (116 aa).

This sequence belongs to the bacterial ribosomal protein bL20 family.

The protein resides in the plastid. It localises to the chloroplast. Functionally, binds directly to 23S ribosomal RNA and is necessary for the in vitro assembly process of the 50S ribosomal subunit. It is not involved in the protein synthesizing functions of that subunit. This chain is Large ribosomal subunit protein bL20c, found in Ipomoea purpurea (Common morning glory).